Reading from the N-terminus, the 644-residue chain is Exoribonuclease 2 (644 aa).

Residues 189-516 enclose the RNB domain; it reads REDLTALDFV…NHRLLKAVIK (328 aa). Positions 561–643 constitute an S1 motif domain; that stretch reads GTRFAAEIVD…ETRGIIARPV (83 aa).

The protein belongs to the RNR ribonuclease family. RNase II subfamily.

It localises to the cytoplasm. The catalysed reaction is Exonucleolytic cleavage in the 3'- to 5'-direction to yield nucleoside 5'-phosphates.. Functionally, involved in mRNA degradation. Hydrolyzes single-stranded polyribonucleotides processively in the 3' to 5' direction. This Shigella sonnei (strain Ss046) protein is Exoribonuclease 2.